The chain runs to 145 residues: MNNGVNKLSDLLVLTTEYIQASYETEAFDAHREWVCIVGNPVALHSTLVDIRNGKVVVKVTHPGWAQYLLLKKDEIVHALRRRYPSLGVTGMSTYVDSTSRTPSAKKDMQGLSVSEKQTRPVPELAEVFEQLRTLFQVKTEEPSH.

The interval Tyr-95–Thr-119 is disordered.

This is an uncharacterized protein from Treponema pallidum (strain Nichols).